The sequence spans 208 residues: Uracil phosphoribosyltransferase (208 aa).

5-phospho-alpha-D-ribose 1-diphosphate-binding positions include R78, R103, and 130 to 138 (DPMLATGGS). Residues I193 and 198-200 (GDA) each bind uracil. Residue D199 coordinates 5-phospho-alpha-D-ribose 1-diphosphate.

Belongs to the UPRTase family. Mg(2+) is required as a cofactor.

It catalyses the reaction UMP + diphosphate = 5-phospho-alpha-D-ribose 1-diphosphate + uracil. It participates in pyrimidine metabolism; UMP biosynthesis via salvage pathway; UMP from uracil: step 1/1. With respect to regulation, allosterically activated by GTP. Its function is as follows. Catalyzes the conversion of uracil and 5-phospho-alpha-D-ribose 1-diphosphate (PRPP) to UMP and diphosphate. This Haemophilus ducreyi (strain 35000HP / ATCC 700724) protein is Uracil phosphoribosyltransferase.